The sequence spans 637 residues: Mitochondrial Rho GTPase 1 (637 aa).

Over 1 to 613 (MSDGETLADV…LRRVFYLSDS (613 aa)) the chain is Cytoplasmic. A Miro 1 domain is found at 7-184 (LADVRIVLIG…FYYAQKAVIY (178 aa)). Residues 28–35 (SLLEDEWV), 74–78 (ISEMR), and 135–138 (LPSG) contribute to the GTP site. EF-hand domains are found at residues 200–235 (RAKKALIRVFKICDRDNDGYLSDTELNDFQKLCFGI) and 320–355 (EGVQFVSALFEKYDEDKDGCLSPSELQNLFSVCSAP). The Ca(2+) site is built by D213, D215, D217, Y219, E224, D333, D335, D337, C339, and E344. Positions 436 to 601 (RKVFQCLVVG…FEQLAMMAVY (166 aa)) constitute a Miro 2 domain. Residues 445–452 (GAKDAGKT), 482–486 (KVKEE), and 549–552 (TKVE) contribute to the GTP site. Residues 614-634 (NLLSKITFGAAIVALAGFLVL) traverse the membrane as a helical; Anchor for type IV membrane protein segment. Topologically, residues 635–637 (KNL) are mitochondrial intermembrane.

It belongs to the mitochondrial Rho GTPase family.

The protein localises to the mitochondrion outer membrane. In terms of biological role, mitochondrial GTPase involved in mitochondrial trafficking. Probably involved in control of anterograde transport of mitochondria and their subcellular distribution. The sequence is that of Mitochondrial Rho GTPase 1 from Caenorhabditis briggsae.